Here is a 185-residue protein sequence, read N- to C-terminus: dCTP deaminase (185 aa).

Residues 107–112 (KSTYAR), 131–133 (TLE), Gln152, Tyr166, and Gln176 contribute to the dCTP site. Glu133 functions as the Proton donor/acceptor in the catalytic mechanism.

Belongs to the dCTP deaminase family. Homotrimer.

The enzyme catalyses dCTP + H2O + H(+) = dUTP + NH4(+). It functions in the pathway pyrimidine metabolism; dUMP biosynthesis; dUMP from dCTP (dUTP route): step 1/2. In terms of biological role, catalyzes the deamination of dCTP to dUTP. The polypeptide is dCTP deaminase (Neorickettsia sennetsu (strain ATCC VR-367 / Miyayama) (Ehrlichia sennetsu)).